Here is a 490-residue protein sequence, read N- to C-terminus: Glutamyl-tRNA(Gln) amidotransferase subunit A (490 aa).

Active-site charge relay system residues include lysine 78 and serine 159. Catalysis depends on serine 183, which acts as the Acyl-ester intermediate.

It belongs to the amidase family. GatA subfamily. As to quaternary structure, heterotrimer of A, B and C subunits.

It catalyses the reaction L-glutamyl-tRNA(Gln) + L-glutamine + ATP + H2O = L-glutaminyl-tRNA(Gln) + L-glutamate + ADP + phosphate + H(+). Allows the formation of correctly charged Gln-tRNA(Gln) through the transamidation of misacylated Glu-tRNA(Gln) in organisms which lack glutaminyl-tRNA synthetase. The reaction takes place in the presence of glutamine and ATP through an activated gamma-phospho-Glu-tRNA(Gln). In Paramagnetospirillum magneticum (strain ATCC 700264 / AMB-1) (Magnetospirillum magneticum), this protein is Glutamyl-tRNA(Gln) amidotransferase subunit A.